The chain runs to 62 residues: Large ribosomal subunit protein uL30 (62 aa).

Belongs to the universal ribosomal protein uL30 family. As to quaternary structure, part of the 50S ribosomal subunit.

The protein is Large ribosomal subunit protein uL30 of Dinoroseobacter shibae (strain DSM 16493 / NCIMB 14021 / DFL 12).